The sequence spans 578 residues: ATP-dependent RNA helicase has-1 (578 aa).

Residues 1 to 91 (MASEFSKKRK…KDAEAGDELT (91 aa)) are disordered. Residues 13–26 (DAKIATEDGAATDK) show a composition bias toward basic and acidic residues. Over residues 27 to 36 (KTKKVKKDKK) the composition is skewed to basic residues. Acidic residues-rich tracts occupy residues 43–54 (EVVEDATPEEEN) and 77–88 (EDSDDKDAEAGD). Residues 107 to 135 (TDFSELNLSDKTMKAIAEMGFTKMTEIQR) carry the Q motif motif. The region spanning 138-313 (IPPLLAGKDV…RISLRPGPLY (176 aa)) is the Helicase ATP-binding domain. 151–158 (AKTGSGKT) lines the ATP pocket. The DEAD box signature appears at 260–263 (DEAD). The short motif at 339-355 (KRFLLLFSFLKKMQKKK) is the Bipartite nuclear localization signal element. In terms of domain architecture, Helicase C-terminal spans 343–497 (LLFSFLKKMQ…NVQSQLEKLI (155 aa)). The segment at 556–578 (SMSRDKKQTSRRAYGSQPKQNRH) is disordered.

Belongs to the DEAD box helicase family. DDX18/HAS1 subfamily. As to quaternary structure, associates in the nucleolus with the 60S and pre-60S ribosomal subunits.

Its subcellular location is the nucleus. The protein localises to the nucleolus. The enzyme catalyses ATP + H2O = ADP + phosphate + H(+). Functionally, ATP-dependent RNA helicase involved in 40S ribosomal subunit biogenesis. Required for the processing and cleavage of 35S pre-rRNA at sites A0, A1, and A2, leading to mature 18S rRNA. In Neurospora crassa (strain ATCC 24698 / 74-OR23-1A / CBS 708.71 / DSM 1257 / FGSC 987), this protein is ATP-dependent RNA helicase has-1 (has-1).